The following is a 138-amino-acid chain: Large ribosomal subunit protein uL16 (138 aa).

This sequence belongs to the universal ribosomal protein uL16 family. As to quaternary structure, part of the 50S ribosomal subunit.

Functionally, binds 23S rRNA and is also seen to make contacts with the A and possibly P site tRNAs. This is Large ribosomal subunit protein uL16 from Gluconacetobacter diazotrophicus (strain ATCC 49037 / DSM 5601 / CCUG 37298 / CIP 103539 / LMG 7603 / PAl5).